Here is a 138-residue protein sequence, read N- to C-terminus: Acidic phospholipase A2 Ts-A6 (138 aa).

Positions 1–16 are cleaved as a signal peptide; sequence MRALWIMAVLLLGVEG. Intrachain disulfides connect C42–C131, C44–C60, C59–C111, C65–C138, C66–C104, C73–C97, and C91–C102. The Ca(2+) site is built by Y43, G45, and G47. H63 is an active-site residue. D64 lines the Ca(2+) pocket. Residue D105 is part of the active site.

Requires Ca(2+) as cofactor. As to expression, expressed by the venom gland.

The protein resides in the secreted. The catalysed reaction is a 1,2-diacyl-sn-glycero-3-phosphocholine + H2O = a 1-acyl-sn-glycero-3-phosphocholine + a fatty acid + H(+). Its function is as follows. Snake venom phospholipase A2 (PLA2) that shows a moderate inhibition of ADP-induced human platelet aggregation when tested on platelet rich plasma. Exhibits high hydrolytic activities and prefers the anionic micelles (dPPC with deoxycholate) to the zwitterionic micelles (dPPC with Triton X-100). PLA2 catalyzes the calcium-dependent hydrolysis of the 2-acyl groups in 3-sn-phosphoglycerides. This Trimeresurus stejnegeri (Chinese green tree viper) protein is Acidic phospholipase A2 Ts-A6.